The sequence spans 162 residues: Probable chemoreceptor glutamine deamidase CheD (162 aa).

The protein belongs to the CheD family.

It carries out the reaction L-glutaminyl-[protein] + H2O = L-glutamyl-[protein] + NH4(+). In terms of biological role, probably deamidates glutamine residues to glutamate on methyl-accepting chemotaxis receptors (MCPs), playing an important role in chemotaxis. The chain is Probable chemoreceptor glutamine deamidase CheD from Clostridium kluyveri (strain ATCC 8527 / DSM 555 / NBRC 12016 / NCIMB 10680 / K1).